Consider the following 578-residue polypeptide: Probable methylcrotonoyl-CoA carboxylase beta chain, mitochondrial (578 aa).

A mitochondrion-targeting transit peptide spans 1-29 (MIRLNWLFRSSSVLLRSQVRLLHVGDANV). The CoA carboxyltransferase N-terminal domain maps to 48–305 (MASLVGDLRN…SATNSYNDQL (258 aa)). Residues 48-570 (MASLVGDLRN…KAALNNAGQE (523 aa)) are carboxyltransferase. In terms of domain architecture, CoA carboxyltransferase C-terminal spans 321–570 (AVEEPRYDAE…KAALNNAGQE (250 aa)). The acyl-CoA binding stretch occupies residues 355–388 (DGSRFTEFKKLYGETLVCGFAKLYGHTVGIVGNN).

This sequence belongs to the AccD/PCCB family. As to expression, expressed in third instar larval ring gland (lateral and medial secretory cells and corpus cardiacum cells) and CNS.

The protein resides in the mitochondrion matrix. It carries out the reaction 3-methylbut-2-enoyl-CoA + hydrogencarbonate + ATP = 3-methyl-(2E)-glutaconyl-CoA + ADP + phosphate + H(+). It participates in amino-acid degradation; L-leucine degradation; (S)-3-hydroxy-3-methylglutaryl-CoA from 3-isovaleryl-CoA: step 2/3. Its function is as follows. Carboxyltransferase subunit of the 3-methylcrotonyl-CoA carboxylase, an enzyme that catalyzes the conversion of 3-methylcrotonyl-CoA to 3-methylglutaconyl-CoA, a critical step for leucine and isovaleric acid catabolism. Vital for adult survival. This is Probable methylcrotonoyl-CoA carboxylase beta chain, mitochondrial from Drosophila melanogaster (Fruit fly).